Reading from the N-terminus, the 533-residue chain is Protein translocase subunit SecD (533 aa).

A run of 6 helical transmembrane segments spans residues 8-28 (ALLVVVVLIVGVVYLVPTFVS), 377-397 (IVGGIGTILFMLIYYRFGGVV), 400-420 (LALALNVLLVLAGMAAFGFTL), 422-442 (LPGIAGIALTIGMAVDANVLI), 469-489 (LTILDANVTTIIAALVLLQFG), and 495-515 (GFAVTLTVGLAANMFTAIFVT).

The protein belongs to the SecD/SecF family. SecD subfamily. Forms a complex with SecF. Part of the essential Sec protein translocation apparatus which comprises SecA, SecYEG and auxiliary proteins SecDF-YajC and YidC.

Its subcellular location is the cell inner membrane. Functionally, part of the Sec protein translocase complex. Interacts with the SecYEG preprotein conducting channel. SecDF uses the proton motive force (PMF) to complete protein translocation after the ATP-dependent function of SecA. This chain is Protein translocase subunit SecD, found in Syntrophobacter fumaroxidans (strain DSM 10017 / MPOB).